Consider the following 231-residue polypeptide: MFSNWNIFLNYKNFTINQEIKNKLNLYYQILIEENQKYNLTRITELNEVFEKHFLDSLLFVEQFQIIDQKIADIGTGAGFPGIVLKIFFPNIKLTLIESNNKKVNFLKYLVQKLNLNDVEILNKRAEELNEYKEQFDIVISRAVAYLNIILELGVQLVKVNGMFILLKGPKAYQEIKDLKNKDQKMNLKLINIQELEDTGFGTRINLFYKKINHTNNLYPRKYQQILKESK.

Residues Gly-75, Phe-80, 126 to 127, and Arg-142 each bind S-adenosyl-L-methionine; that span reads AE.

Belongs to the methyltransferase superfamily. RNA methyltransferase RsmG family.

It is found in the cytoplasm. Specifically methylates the N7 position of a guanine in 16S rRNA. In Mycoplasma capricolum subsp. capricolum (strain California kid / ATCC 27343 / NCTC 10154), this protein is Ribosomal RNA small subunit methyltransferase G.